The chain runs to 378 residues: MAMETGLIFHPYMRPGRSARQTFDWGIKSAVQADSVGIDSMMISEHASQIWENIPNPELLIAAAALQTKNIKFAPMAHLLPHQHPAKLATMIGWLSQILEGRYFLGIGAGAYPQASYMHGIRNAGQSNTATGGEETKNLNDMVRESLFIMEKIWKREPFFHEGKYWDAGYPEELEGEEGDEQHKLADFSPWGGKAPEIAVTGFSYNSPSMRLAGERNFKPVSIFSGLDALKRHWEVYSEAAIEAGHTPDRSRHAVSHTVFCADTDKEAKRLVMEGPIGYCFERYLIPIWRRFGMMDGYAKDAGIDPVDADLEFLVDNVFLVGSPDTVTEKINALFEATGGWGTLQVEAHDYYDDPAPWFQSLELISKEVAPKILLPKR.

Residues histidine 10, serine 44, methionine 76, and 201–209 (TGFSYNSPS) contribute to the FMN site.

This sequence belongs to the bacterial luciferase oxidoreductase family. Homodimer. Likely forms a loose transient complex with a P.putida flavin reductase that provides the required FMNH(2) to the enzyme.

It carries out the reaction (1S,4S)-bornane-2,5-dione + FMNH2 + O2 = (1S,4S)-5-oxo-1,2-campholide + FMN + H2O + H(+). In terms of biological role, involved in the degradation and assimilation of (-)-camphor, which allows P.putida strain NCIMB 10007 to grow on this enantiomer of camphor as the sole carbon source. Catalyzes the FMNH(2)-dependent lactonization of 3,6-diketocamphane via a Baeyer-Villiger oxidation to produce the unstable lactone 5-oxo-1,2-campholide with (S,S) configuration, that presumably undergoes spontaneous hydrolysis to form 2-oxo-Delta(3)-4,5,5-trimethylcyclopentenylacetate. Is also able to convert (-)-camphor to the corresponding lactone in vitro. Shows no conversion of (+)-camphor, (+)-fenchone, (-)-fenchone, and (+)-nopinone. Acts on other bicyclic ketones but very poorly on a few 2- and 4-substituted monocyclic ketones. This is 3,6-diketocamphane 1,6-monooxygenase from Pseudomonas putida (Arthrobacter siderocapsulatus).